Reading from the N-terminus, the 186-residue chain is Protein C (186 aa).

A compositionally biased stretch (polar residues) spans 1–15 (MSKTDWNASGLSRPS). Residues 1-44 (MSKTDWNASGLSRPSPSAHWPSRKLWQHGQKYQTTQDRSEPPAG) form a disordered region.

This sequence belongs to the morbillivirus protein C family. Interacts with the phosphoprotein (via C-terminus); this interaction allows C to associate with the ribonucleocapsid.

Its subcellular location is the host nucleus. The protein resides in the host cytoplasmic vesicle. Its function is as follows. Ribonucleocapsid-associated protein that interacts with the phosphoprotein (P), thereby increasing replication accuracy and processivity of the polymerase complex. In Homo sapiens (Human), this protein is Protein C (P/V/C).